The sequence spans 837 residues: Translation initiation factor IF-2 (837 aa).

2 disordered regions span residues 1 to 44 (MTEK…VRKS) and 62 to 251 (KAQE…TKPA). Composition is skewed to basic and acidic residues over residues 62–102 (KAQE…EAKP) and 111–165 (ADPE…HNDS). Residues 189–205 (RENHIRTGKNKVTKAKK) show a composition bias toward basic residues. The segment covering 206-229 (GGRDDNGSKDERSADRRNQKDMRG) has biased composition (basic and acidic residues). Residues 242–251 (TLQQAFTKPA) are compositionally biased toward polar residues. The region spanning 337–506 (QRAPVVTIMG…LLQSEVLELT (170 aa)) is the tr-type G domain. Positions 346–353 (GHVDHGKT) are G1. Residue 346 to 353 (GHVDHGKT) coordinates GTP. The G2 stretch occupies residues 371–375 (GITQH). Residues 392–395 (DTPG) are G3. GTP contacts are provided by residues 392 to 396 (DTPGH) and 446 to 449 (NKID). A G4 region spans residues 446 to 449 (NKID). Residues 482-484 (SAK) form a G5 region.

It belongs to the TRAFAC class translation factor GTPase superfamily. Classic translation factor GTPase family. IF-2 subfamily.

The protein localises to the cytoplasm. Functionally, one of the essential components for the initiation of protein synthesis. Protects formylmethionyl-tRNA from spontaneous hydrolysis and promotes its binding to the 30S ribosomal subunits. Also involved in the hydrolysis of GTP during the formation of the 70S ribosomal complex. This is Translation initiation factor IF-2 from Actinobacillus succinogenes (strain ATCC 55618 / DSM 22257 / CCUG 43843 / 130Z).